The primary structure comprises 291 residues: 4-diphosphocytidyl-2-C-methyl-D-erythritol kinase (291 aa).

Lys-10 is a catalytic residue. 94 to 104 contributes to the ATP binding site; it reads PVSAGLAGGSS. Asp-136 is an active-site residue.

It belongs to the GHMP kinase family. IspE subfamily.

It catalyses the reaction 4-CDP-2-C-methyl-D-erythritol + ATP = 4-CDP-2-C-methyl-D-erythritol 2-phosphate + ADP + H(+). Its pathway is isoprenoid biosynthesis; isopentenyl diphosphate biosynthesis via DXP pathway; isopentenyl diphosphate from 1-deoxy-D-xylulose 5-phosphate: step 3/6. Catalyzes the phosphorylation of the position 2 hydroxy group of 4-diphosphocytidyl-2C-methyl-D-erythritol. In Listeria innocua serovar 6a (strain ATCC BAA-680 / CLIP 11262), this protein is 4-diphosphocytidyl-2-C-methyl-D-erythritol kinase.